Consider the following 534-residue polypeptide: CTP synthase (534 aa).

The amidoligase domain stretch occupies residues 1–267 (MTKYIFVTGG…DQIVCDHLKL (267 aa)). A CTP-binding site is contributed by S13. A UTP-binding site is contributed by S13. 14-19 (SIGKGI) contacts ATP. Y54 contacts L-glutamine. ATP is bound at residue D71. Mg(2+) is bound by residues D71 and E141. Residues 148 to 150 (DIE), 188 to 193 (KTKPTQ), and K224 contribute to the CTP site. UTP is bound by residues 188–193 (KTKPTQ) and K224. Positions 292 to 534 (KIALVGKYVE…FVTAAVENAK (243 aa)) constitute a Glutamine amidotransferase type-1 domain. Residue G354 coordinates L-glutamine. Catalysis depends on C381, which acts as the Nucleophile; for glutamine hydrolysis. L-glutamine contacts are provided by residues 382-385 (LGMQ), E405, and R463. Active-site residues include H508 and E510.

Belongs to the CTP synthase family. In terms of assembly, homotetramer.

The enzyme catalyses UTP + L-glutamine + ATP + H2O = CTP + L-glutamate + ADP + phosphate + 2 H(+). The catalysed reaction is L-glutamine + H2O = L-glutamate + NH4(+). It carries out the reaction UTP + NH4(+) + ATP = CTP + ADP + phosphate + 2 H(+). It functions in the pathway pyrimidine metabolism; CTP biosynthesis via de novo pathway; CTP from UDP: step 2/2. Its activity is regulated as follows. Allosterically activated by GTP, when glutamine is the substrate; GTP has no effect on the reaction when ammonia is the substrate. The allosteric effector GTP functions by stabilizing the protein conformation that binds the tetrahedral intermediate(s) formed during glutamine hydrolysis. Inhibited by the product CTP, via allosteric rather than competitive inhibition. Its function is as follows. Catalyzes the ATP-dependent amination of UTP to CTP with either L-glutamine or ammonia as the source of nitrogen. Regulates intracellular CTP levels through interactions with the four ribonucleotide triphosphates. The polypeptide is CTP synthase (Streptococcus thermophilus (strain CNRZ 1066)).